The sequence spans 107 residues: Iron-sulfur cluster assembly protein CyaY (107 aa).

This sequence belongs to the frataxin family.

In terms of biological role, involved in iron-sulfur (Fe-S) cluster assembly. May act as a regulator of Fe-S biogenesis. This is Iron-sulfur cluster assembly protein CyaY from Neisseria gonorrhoeae (strain ATCC 700825 / FA 1090).